An 860-amino-acid chain; its full sequence is DNA mismatch repair protein MutS (860 aa).

607–614 (GPNMSGKS) is an ATP binding site.

Belongs to the DNA mismatch repair MutS family.

This protein is involved in the repair of mismatches in DNA. It is possible that it carries out the mismatch recognition step. This protein has a weak ATPase activity. This Listeria monocytogenes serotype 4b (strain CLIP80459) protein is DNA mismatch repair protein MutS.